The sequence spans 92 residues: Putative pterin-4-alpha-carbinolamine dehydratase 2 (92 aa).

It belongs to the pterin-4-alpha-carbinolamine dehydratase family.

The catalysed reaction is (4aS,6R)-4a-hydroxy-L-erythro-5,6,7,8-tetrahydrobiopterin = (6R)-L-erythro-6,7-dihydrobiopterin + H2O. This Gloeobacter violaceus (strain ATCC 29082 / PCC 7421) protein is Putative pterin-4-alpha-carbinolamine dehydratase 2.